The primary structure comprises 209 residues: Inorganic pyrophosphatase (209 aa).

Positions 38, 52, and 64 each coordinate substrate. 3 residues coordinate Mg(2+): Asp92, Asp97, and Asp130. Tyr167 is a substrate binding site.

It belongs to the PPase family. In terms of assembly, homohexamer. Requires Mg(2+) as cofactor.

It is found in the cytoplasm. It catalyses the reaction diphosphate + H2O = 2 phosphate + H(+). In terms of biological role, catalyzes the hydrolysis of inorganic pyrophosphate (PPi) forming two phosphate ions. This chain is Inorganic pyrophosphatase, found in Chlamydia muridarum (strain MoPn / Nigg).